Consider the following 455-residue polypeptide: UDP-N-acetylmuramoylalanine--D-glutamate ligase (455 aa).

118-124 contributes to the ATP binding site; sequence GTNGKST.

Belongs to the MurCDEF family.

Its subcellular location is the cytoplasm. It carries out the reaction UDP-N-acetyl-alpha-D-muramoyl-L-alanine + D-glutamate + ATP = UDP-N-acetyl-alpha-D-muramoyl-L-alanyl-D-glutamate + ADP + phosphate + H(+). Its pathway is cell wall biogenesis; peptidoglycan biosynthesis. Its function is as follows. Cell wall formation. Catalyzes the addition of glutamate to the nucleotide precursor UDP-N-acetylmuramoyl-L-alanine (UMA). The sequence is that of UDP-N-acetylmuramoylalanine--D-glutamate ligase from Myxococcus xanthus (strain DK1622).